Here is a 990-residue protein sequence, read N- to C-terminus: TonB-dependent receptor P26 (990 aa).

Residues 86–93 (DEVVVIGY) carry the TonB box motif. One can recognise a TBDR plug domain in the interval 97–213 (RKSDLTGSVS…ANGVVLVTTK (117 aa)). Residues 220–990 (SSKPEVSANI…TITLGLNVTF (771 aa)) form the TBDR beta-barrel domain. Positions 878–902 (TPENPTSDIPRAGGDSVTGTPPNSA) are disordered. A TonB C-terminal box motif is present at residues 974 to 990 (GSYPNPRTITLGLNVTF).

This sequence belongs to the TonB-dependent receptor family.

Its subcellular location is the cell outer membrane. Functionally, tonB-dependent receptor probably involved in ulvan degradation. Ulvan is the main polysaccharide component of the Ulvales (green seaweed) cell wall. It is composed of disaccharide building blocks comprising 3-sulfated rhamnose (Rha3S) linked to D-glucuronic acid (GlcA), L-iduronic acid (IduA), or D-xylose (Xyl). The TonB-dependent receptor may mediate transport of ulvan oligosaccharides from the surface of the outer membrane to the periplasm for subsequent degradation. This Formosa agariphila (strain DSM 15362 / KCTC 12365 / LMG 23005 / KMM 3901 / M-2Alg 35-1) protein is TonB-dependent receptor P26.